A 1220-amino-acid polypeptide reads, in one-letter code: Plasma membrane calcium-transporting ATPase 1 (1220 aa).

Residue glycine 2 is modified to N-acetylglycine. Topologically, residues 2–105 (GDMANNSVAY…KTFLQLVWEA (104 aa)) are cytoplasmic. Residues serine 8 and serine 17 each carry the phosphoserine modification. A helical transmembrane segment spans residues 106–126 (LQDVTLIILEIAAIVSLGLSF). The Extracellular portion of the chain corresponds to 127–154 (YQPPEGDNALCGEVSVGEEEGEGETGWI). Residues 155–175 (EGAAILLSVVCVVLVTAFNDW) traverse the membrane as a helical segment. The Cytoplasmic segment spans residues 176–366 (SKEKQFRGLQ…KEKSVLQGKL (191 aa)). A disordered region spans residues 297–356 (EEEKKDEKKKEKKNKKQDGAIENRNKAKAQDGAAMEMQPLKSEEGGDGDEKDKKKANLPK). 2 stretches are compositionally biased toward basic and acidic residues: residues 312 to 325 (KQDGAIENRNKAKA) and 337 to 356 (KSEEGGDGDEKDKKKANLPK). A Phosphoserine modification is found at serine 338. Residues 367 to 386 (TKLAVQIGKAGLLMSAITVI) form a helical membrane-spanning segment. The Extracellular segment spans residues 387 to 418 (ILVLYFVIDTFWVQKRPWLAECTPIYIQYFVK). Residues 419–439 (FFIIGVTVLVVAVPEGLPLAV) traverse the membrane as a helical segment. The Cytoplasmic segment spans residues 440-855 (TISLAYSVKK…RNVYDSISKF (416 aa)). The active-site 4-aspartylphosphate intermediate is aspartate 475. The Mg(2+) site is built by aspartate 475, threonine 477, aspartate 797, and aspartate 801. Residues 856–876 (LQFQLTVNVVAVIVAFTGACI) traverse the membrane as a helical segment. Residues 877 to 882 (TQDSPL) are Extracellular-facing. A helical transmembrane segment spans residues 883–903 (KAVQMLWVNLIMDTLASLALA). The Cytoplasmic portion of the chain corresponds to 904-927 (TEPPTESLLLRKPYGRNKPLISRT). Residues 928–948 (MMKNILGHAFYQLVVVFTLLF) traverse the membrane as a helical segment. Residues 949-971 (AGEKFFDIDSGRNAPLHAPPSEH) are Extracellular-facing. The chain crosses the membrane as a helical span at residues 972 to 991 (YTIVFNTFVLMQLFNEINAR). Over 992-1005 (KIHGERNVFEGIFN) the chain is Cytoplasmic. The helical transmembrane segment at 1006 to 1027 (NAIFCTIVLGTFVVQIIIVQFG) threads the bilayer. At 1028-1039 (GKPFSCSELSIE) the chain is on the extracellular side. The helical transmembrane segment at 1040-1060 (QWLWSIFLGMGTLLWGQLIST) threads the bilayer. Residues 1061–1220 (IPTSRLKFLK…SPLHSLETSL (160 aa)) are Cytoplasmic-facing. Residues 1100-1117 (LRRGQILWFRGLNRIQTQ) are calmodulin-binding subdomain A. The residue at position 1116 (threonine 1116) is a Phosphothreonine; by PKC. Positions 1118–1127 (IRVVNAFRSS) are calmodulin-binding subdomain B. A required for basolateral membrane targeting region spans residues 1118 to 1220 (IRVVNAFRSS…SPLHSLETSL (103 aa)). 2 positions are modified to phosphoserine: serine 1140 and serine 1155. Residues 1160-1220 (PLIDDTDAED…SPLHSLETSL (61 aa)) form a disordered region. Threonine 1165 is subject to Phosphothreonine. Serine 1178 and serine 1182 each carry phosphoserine. Positions 1200-1220 (MNKSATSSSPGSPLHSLETSL) are enriched in polar residues.

Belongs to the cation transport ATPase (P-type) (TC 3.A.3) family. Type IIB subfamily. As to quaternary structure, monomer. Dimer. Oligomer. Calmodulin binding. Interacts with PDZD11. Interacts with SLC35G1 and STIM1. Interacts with YWHAE; interacts with the monomeric and dimeric forms of the YWHAE but prefer the monomer form; this interaction inhibits calcium-transporting ATPase activity. Interacts with NPTN; this interaction stabilizes ATP2B1 and increases ATPase activity; this interaction controls T cell calcium homeostasis following T cell activation. Interacts with EPB41; regulates small intestinal calcium absorption through regulation of membrane expression of ATP2B1.

It localises to the cell membrane. The protein resides in the basolateral cell membrane. It is found in the synapse. Its subcellular location is the presynaptic cell membrane. The protein localises to the cytoplasmic vesicle. It localises to the secretory vesicle. The protein resides in the synaptic vesicle membrane. It carries out the reaction Ca(2+)(in) + ATP + H2O = Ca(2+)(out) + ADP + phosphate + H(+). Catalyzes the hydrolysis of ATP coupled with the transport of calcium from the cytoplasm to the extracellular space thereby maintaining intracellular calcium homeostasis. Plays a role in blood pressure regulation through regulation of intracellular calcium concentration and nitric oxide production leading to regulation of vascular smooth muscle cells vasoconstriction. Positively regulates bone mineralization through absorption of calcium from the intestine. Plays dual roles in osteoclast differentiation and survival by regulating RANKL-induced calcium oscillations in preosteoclasts and mediating calcium extrusion in mature osteoclasts. Regulates insulin sensitivity through calcium/calmodulin signaling pathway by regulating AKT1 activation and NOS3 activation in endothelial cells. May play a role in synaptic transmission by modulating calcium and proton dynamics at the synaptic vesicles. The sequence is that of Plasma membrane calcium-transporting ATPase 1 from Sus scrofa (Pig).